Reading from the N-terminus, the 706-residue chain is ABC transporter D family member 2, chloroplastic (706 aa).

A chloroplast-targeting transit peptide spans 1-44; that stretch reads MILMITAPVCPPHLLLRHSSLLRHESSIGNFHRKKNPRFRTVSC. The residue at position 45 (S45) is an N-acetylserine. Helical transmembrane passes span 88 to 108, 124 to 144, 200 to 222, 237 to 257, and 326 to 346; these read LAAV…FNFL, FTKQ…FFVL, TALS…SNIL, SFGG…LNFL, and ILPV…FGVI. The 285-residue stretch at 88–372 folds into the ABC transmembrane type-1 domain; that stretch reads LAAVFALTLA…VVYQFQAISS (285 aa). The 268-residue stretch at 430–697 folds into the ABC transporter domain; that stretch reads LEIEELTLQT…DAQDSLYGRL (268 aa). 464–471 lines the ATP pocket; the sequence is GPSGSGKT. A disordered region spans residues 545 to 569; it reads TTPGGSNIDGSPPLLIREDGNEKPT. The segment covering 560–569 has biased composition (basic and acidic residues); the sequence is IREDGNEKPT.

The protein belongs to the ABC transporter superfamily. ABCD family. Peroxisomal fatty acyl CoA transporter (TC 3.A.1.203) subfamily. As to quaternary structure, homodimer or heterodimer.

The protein localises to the membrane. The protein resides in the plastid. It is found in the chloroplast. This Arabidopsis thaliana (Mouse-ear cress) protein is ABC transporter D family member 2, chloroplastic (ABCC2).